A 324-amino-acid polypeptide reads, in one-letter code: THUMP domain-containing protein 1 homolog (324 aa).

Disordered stretches follow at residues 1 to 24 and 67 to 104; these read MEPASKKSKMGKNVKFNNNKKKYF and SEKPENEPEKKQPEEGAGGDAGEDDPKPAAGGTSDDDD. Over residues 68 to 80 the composition is skewed to basic and acidic residues; that stretch reads EKPENEPEKKQPE. At T99 the chain carries Phosphothreonine. The residue at position 100 (S100) is a Phosphoserine. The THUMP domain maps to 154–260; sequence DIATTGKSMS…RGWCLLSVID (107 aa). The segment at 275 to 324 is disordered; it reads NPSDKKSSGEGDSKSETSEVANGNDKEQAESSEESKSNDDENKDSTENDK. 2 stretches are compositionally biased toward basic and acidic residues: residues 277–291 and 298–324; these read SDKKSSGEGDSKSET and NDKEQAESSEESKSNDDENKDSTENDK.

Belongs to the THUMPD1 family.

The polypeptide is THUMP domain-containing protein 1 homolog (Drosophila melanogaster (Fruit fly)).